The following is a 90-amino-acid chain: UPF0223 protein LMHCC_1569 (90 aa).

The protein belongs to the UPF0223 family.

The sequence is that of UPF0223 protein LMHCC_1569 from Listeria monocytogenes serotype 4a (strain HCC23).